The following is a 359-amino-acid chain: Stearoyl-CoA desaturase (359 aa).

The Cytoplasmic portion of the chain corresponds to 1 to 72; sequence MPAHLLQEEI…EGPRPKLEYV (72 aa). A helical transmembrane segment spans residues 73–93; that stretch reads WRNIILMSLLHLGALYGIILI. Asn75 is a binding site for substrate. At 94-97 the chain is on the lumenal side; that stretch reads PTCK. A helical membrane pass occupies residues 98–118; sequence IYTLLWAFAYYLLSAVGVTAG. Topologically, residues 119–217 are cytoplasmic; that stretch reads AHRLWSHRTY…EKLVMFQRRY (99 aa). Fe cation is bound by residues His120 and His125. The short motif at 120 to 125 is the Histidine box-1 element; that stretch reads HRLWSH. 3 residues coordinate substrate: Asn148, Arg155, and Asp156. Fe cation contacts are provided by His157, His160, and His161. A Histidine box-2 motif is present at residues 157 to 161; the sequence is HRAHH. Substrate-binding residues include Arg188 and Lys189. A Phosphoserine modification is found at Ser203. Residues 218 to 237 traverse the membrane as a helical segment; that stretch reads YKPGILLMCFILPTIVPWYC. Topologically, residues 238–241 are lumenal; the sequence is WGEA. The helical transmembrane segment at 242–263 threads the bilayer; the sequence is FPQSLFVATFLRYAIVLNATWL. Substrate is bound at residue Trp262. Topologically, residues 264–359 are cytoplasmic; the sequence is VNSAAHLYGY…RTGDESYKSG (96 aa). Fe cation contacts are provided by His269, His298, His301, and His302. The Histidine box-3 motif lies at 298 to 302; the sequence is HNYHH.

Belongs to the fatty acid desaturase type 1 family. Fe(2+) serves as cofactor.

It is found in the endoplasmic reticulum membrane. It catalyses the reaction octadecanoyl-CoA + 2 Fe(II)-[cytochrome b5] + O2 + 2 H(+) = (9Z)-octadecenoyl-CoA + 2 Fe(III)-[cytochrome b5] + 2 H2O. It carries out the reaction hexadecanoyl-CoA + 2 Fe(II)-[cytochrome b5] + O2 + 2 H(+) = (9Z)-hexadecenoyl-CoA + 2 Fe(III)-[cytochrome b5] + 2 H2O. In terms of biological role, stearoyl-CoA desaturase that utilizes O(2) and electrons from reduced cytochrome b5 to introduce the first double bond into saturated fatty acyl-CoA substrates. Catalyzes the insertion of a cis double bond at the delta-9 position into fatty acyl-CoA substrates including palmitoyl-CoA and stearoyl-CoA. Gives rise to a mixture of 16:1 and 18:1 unsaturated fatty acids. Plays an important role in lipid biosynthesis. Plays an important role in regulating the expression of genes that are involved in lipogenesis and in regulating mitochondrial fatty acid oxidation. Plays an important role in body energy homeostasis. Contributes to the biosynthesis of membrane phospholipids, cholesterol esters and triglycerides. This chain is Stearoyl-CoA desaturase (SCD), found in Sus scrofa (Pig).